Here is a 152-residue protein sequence, read N- to C-terminus: Ribosome maturation factor RimP (152 aa).

Belongs to the RimP family.

It is found in the cytoplasm. Functionally, required for maturation of 30S ribosomal subunits. This chain is Ribosome maturation factor RimP, found in Desulfitobacterium hafniense (strain Y51).